The sequence spans 275 residues: Large ribosomal subunit protein uL2 (275 aa).

The interval Val223–Lys275 is disordered.

It belongs to the universal ribosomal protein uL2 family. Part of the 50S ribosomal subunit. Forms a bridge to the 30S subunit in the 70S ribosome.

Functionally, one of the primary rRNA binding proteins. Required for association of the 30S and 50S subunits to form the 70S ribosome, for tRNA binding and peptide bond formation. It has been suggested to have peptidyltransferase activity; this is somewhat controversial. Makes several contacts with the 16S rRNA in the 70S ribosome. In Shewanella halifaxensis (strain HAW-EB4), this protein is Large ribosomal subunit protein uL2.